The chain runs to 180 residues: Large ribosomal subunit protein uL5 (180 aa).

This sequence belongs to the universal ribosomal protein uL5 family. Part of the 50S ribosomal subunit; part of the 5S rRNA/L5/L18/L25 subcomplex. Contacts the 5S rRNA and the P site tRNA. Forms a bridge to the 30S subunit in the 70S ribosome.

Functionally, this is one of the proteins that bind and probably mediate the attachment of the 5S RNA into the large ribosomal subunit, where it forms part of the central protuberance. In the 70S ribosome it contacts protein S13 of the 30S subunit (bridge B1b), connecting the 2 subunits; this bridge is implicated in subunit movement. Contacts the P site tRNA; the 5S rRNA and some of its associated proteins might help stabilize positioning of ribosome-bound tRNAs. This is Large ribosomal subunit protein uL5 from Polynucleobacter necessarius subsp. necessarius (strain STIR1).